Consider the following 222-residue polypeptide: Phosphoribosylformylglycinamidine synthase subunit PurQ (222 aa).

Residues 3–222 (AAVVVFPGSN…RALSGLLTDA (220 aa)) enclose the Glutamine amidotransferase type-1 domain. C86 serves as the catalytic Nucleophile. Active-site residues include H194 and E196.

As to quaternary structure, part of the FGAM synthase complex composed of 1 PurL, 1 PurQ and 2 PurS subunits.

It localises to the cytoplasm. It carries out the reaction N(2)-formyl-N(1)-(5-phospho-beta-D-ribosyl)glycinamide + L-glutamine + ATP + H2O = 2-formamido-N(1)-(5-O-phospho-beta-D-ribosyl)acetamidine + L-glutamate + ADP + phosphate + H(+). The enzyme catalyses L-glutamine + H2O = L-glutamate + NH4(+). It functions in the pathway purine metabolism; IMP biosynthesis via de novo pathway; 5-amino-1-(5-phospho-D-ribosyl)imidazole from N(2)-formyl-N(1)-(5-phospho-D-ribosyl)glycinamide: step 1/2. In terms of biological role, part of the phosphoribosylformylglycinamidine synthase complex involved in the purines biosynthetic pathway. Catalyzes the ATP-dependent conversion of formylglycinamide ribonucleotide (FGAR) and glutamine to yield formylglycinamidine ribonucleotide (FGAM) and glutamate. The FGAM synthase complex is composed of three subunits. PurQ produces an ammonia molecule by converting glutamine to glutamate. PurL transfers the ammonia molecule to FGAR to form FGAM in an ATP-dependent manner. PurS interacts with PurQ and PurL and is thought to assist in the transfer of the ammonia molecule from PurQ to PurL. The sequence is that of Phosphoribosylformylglycinamidine synthase subunit PurQ from Ruegeria sp. (strain TM1040) (Silicibacter sp.).